Here is a 1042-residue protein sequence, read N- to C-terminus: Disintegrin and metalloproteinase domain-containing protein unc-71 (1042 aa).

The N-terminal stretch at 1 to 23 is a signal peptide; that stretch reads MICASKITMLGLLVMCTLGGVLG. Residues 24-746 lie on the Extracellular side of the membrane; the sequence is KVDIRQTTAN…NIGTTLETAT (723 aa). N-linked (GlcNAc...) asparagine glycans are attached at residues Asn-103 and Asn-155. The 205-residue stretch at 227-431 folds into the Peptidase M12B domain; that stretch reads KYVEVALIAD…GNIQCLLNKP (205 aa). 4 disulfide bridges follow: Cys-338/Cys-426, Cys-378/Cys-410, Cys-380/Cys-386, and Cys-496/Cys-516. The region spanning 437–524 is the Disintegrin domain; sequence LRECGNGVVD…DCPPDGHLID (88 aa). Asn-538 carries N-linked (GlcNAc...) asparagine glycosylation. An EGF-like domain is found at 662–699; sequence SATACPTNNLALLCSGHGHCTTTARCVCFNGWSGVACD. Disulfide bonds link Cys-666-Cys-681, Cys-675-Cys-687, and Cys-689-Cys-698. Asn-703 is a glycosylation site (N-linked (GlcNAc...) asparagine). The helical transmembrane segment at 747 to 767 threads the bilayer; it reads LFAILLGFGVFLLLCLVCLML. The Cytoplasmic portion of the chain corresponds to 768-1042; that stretch reads CYRRRSVVEI…KLEMTNSMHN (275 aa). 3 disordered regions span residues 779–809, 825–850, and 980–1028; these read KPSDEKDEESPDRQIKFGNMPSYREEKRKRK, DERDSTSLRSRDSAGGSQQLVDRRNG, and HDVG…PSLF. The segment covering 825–836 has biased composition (basic and acidic residues); that stretch reads DERDSTSLRSRD. Positions 1002–1027 are enriched in polar residues; it reads DSPTLVNGASSSSTSNNYNFRQSPSL.

It localises to the cell membrane. In terms of biological role, involved in the migration of sex myoblasts (progenitors of egg-laying muscles), Q neuroblasts and BDU interneurons during development. Involved in axon branching and guidance of neurons including GABAergic type D motor neurons. Promotes sex myoblast migration and positioning independently of gonad attraction cues. May act downstream of mig-13 in order to promote the guidance, migration and positioning of Q neuroblasts and their descendants along the anteroposterior body axis. Required for coordinated movements. The protein is Disintegrin and metalloproteinase domain-containing protein unc-71 of Caenorhabditis elegans.